The following is a 423-amino-acid chain: SH2 domain-containing protein 5 (423 aa).

Residues 28–146 (AQYVGSFPVD…LLCRSFQLAY (119 aa)) form the PID domain. One can recognise an SH2 domain in the interval 296–392 (WAFAGISRPC…LDMGRLNPTY (97 aa)). A disordered region spans residues 392 to 423 (YEEQDCGPPGRPPRTLRPLSHAKSEAELQGLG).

In terms of assembly, interacts with BCR.

The protein localises to the postsynaptic density. In terms of biological role, may be involved in synaptic plasticity regulation through the control of Rac-GTP levels. The polypeptide is SH2 domain-containing protein 5 (Homo sapiens (Human)).